The primary structure comprises 431 residues: Light-independent protochlorophyllide reductase subunit N (431 aa).

[4Fe-4S] cluster is bound by residues C29, C54, and C114.

Belongs to the BchN/ChlN family. As to quaternary structure, protochlorophyllide reductase is composed of three subunits; ChlL, ChlN and ChlB. Forms a heterotetramer of two ChlB and two ChlN subunits. The cofactor is [4Fe-4S] cluster.

It localises to the plastid. It is found in the chloroplast. It carries out the reaction chlorophyllide a + oxidized 2[4Fe-4S]-[ferredoxin] + 2 ADP + 2 phosphate = protochlorophyllide a + reduced 2[4Fe-4S]-[ferredoxin] + 2 ATP + 2 H2O. Its pathway is porphyrin-containing compound metabolism; chlorophyll biosynthesis (light-independent). In terms of biological role, component of the dark-operative protochlorophyllide reductase (DPOR) that uses Mg-ATP and reduced ferredoxin to reduce ring D of protochlorophyllide (Pchlide) to form chlorophyllide a (Chlide). This reaction is light-independent. The NB-protein (ChlN-ChlB) is the catalytic component of the complex. In Nephroselmis olivacea (Green alga), this protein is Light-independent protochlorophyllide reductase subunit N.